Here is a 207-residue protein sequence, read N- to C-terminus: Ribonuclease HII (207 aa).

The RNase H type-2 domain occupies 1 to 207 (MDVLGIDEAG…ATVEKMKNSQ (207 aa)). Positions 7, 8, and 105 each coordinate a divalent metal cation.

This sequence belongs to the RNase HII family. Requires Mn(2+) as cofactor. Mg(2+) serves as cofactor.

It localises to the cytoplasm. The enzyme catalyses Endonucleolytic cleavage to 5'-phosphomonoester.. Functionally, endonuclease that specifically degrades the RNA of RNA-DNA hybrids. The protein is Ribonuclease HII of Methanobrevibacter smithii (strain ATCC 35061 / DSM 861 / OCM 144 / PS).